We begin with the raw amino-acid sequence, 242 residues long: Probable transcriptional regulatory protein Bxeno_A1185 (242 aa).

The protein belongs to the TACO1 family.

The protein resides in the cytoplasm. The chain is Probable transcriptional regulatory protein Bxeno_A1185 from Paraburkholderia xenovorans (strain LB400).